A 482-amino-acid chain; its full sequence is Ribulose bisphosphate carboxylase large chain (482 aa).

Residues 1–2 (MS) constitute a propeptide that is removed on maturation. Position 3 is an N-acetylproline (proline 3). Lysine 14 carries the N6,N6,N6-trimethyllysine modification. Substrate-binding residues include asparagine 123 and threonine 173. Lysine 175 serves as the catalytic Proton acceptor. Lysine 177 is a substrate binding site. Mg(2+) contacts are provided by lysine 201, aspartate 203, and glutamate 204. Residue lysine 201 is modified to N6-carboxylysine. The Proton acceptor role is filled by histidine 294. The substrate site is built by arginine 295, histidine 327, and serine 379.

Belongs to the RuBisCO large chain family. Type I subfamily. Heterohexadecamer of 8 large chains and 8 small chains; disulfide-linked. The disulfide link is formed within the large subunit homodimers. The cofactor is Mg(2+). In terms of processing, the disulfide bond which can form in the large chain dimeric partners within the hexadecamer appears to be associated with oxidative stress and protein turnover.

The protein localises to the plastid. It localises to the chloroplast. The enzyme catalyses 2 (2R)-3-phosphoglycerate + 2 H(+) = D-ribulose 1,5-bisphosphate + CO2 + H2O. The catalysed reaction is D-ribulose 1,5-bisphosphate + O2 = 2-phosphoglycolate + (2R)-3-phosphoglycerate + 2 H(+). Its function is as follows. RuBisCO catalyzes two reactions: the carboxylation of D-ribulose 1,5-bisphosphate, the primary event in carbon dioxide fixation, as well as the oxidative fragmentation of the pentose substrate in the photorespiration process. Both reactions occur simultaneously and in competition at the same active site. The polypeptide is Ribulose bisphosphate carboxylase large chain (Stegnosperma halimifolium).